The sequence spans 614 residues: Probable peptide-binding protein YejA (614 aa).

The signal sequence occupies residues 1 to 27 (MILAPLKSRILIALAASALLIPAVASA).

It belongs to the bacterial solute-binding protein 5 family. The complex is composed of one ATP-binding protein (YejF), two transmembrane proteins (YejB and YejE) and a solute-binding protein (YejA).

Its subcellular location is the periplasm. Probably part of the ABC transporter complex YejABEF, which is likely involved in broad-spectrum peptide import. The chain is Probable peptide-binding protein YejA from Agrobacterium fabrum (strain C58 / ATCC 33970) (Agrobacterium tumefaciens (strain C58)).